The chain runs to 536 residues: Allene oxide synthase, chloroplastic (536 aa).

The transit peptide at 1 to 58 directs the protein to the chloroplast; sequence MASSALNNLVAVNPNTLSPSPKSTPLPNTFSNLRRVSAFRPIKASLFGDSPIKIPGIT. Heme b contacts are provided by Lys151, His182, and Lys186. 3 residues coordinate (13S)-hydroperoxy-(9Z,11E)-octadecadienoate: Ser262, Asn339, and Lys345. Asn339 is a (13S)-hydroperoxy-(9Z,11E,15Z)-octadecatrienoate binding site. Residues Lys487 and Cys489 each coordinate heme b.

Belongs to the cytochrome P450 family. The cofactor is heme b.

It is found in the plastid. Its subcellular location is the chloroplast. The enzyme catalyses (13S)-hydroperoxy-(9Z,11E,15Z)-octadecatrienoate = (9Z,13S,15Z)-12,13-epoxyoctadeca-9,11,15-trienoate + H2O. It carries out the reaction (13S)-hydroperoxy-(9Z,11E)-octadecadienoate = (9Z,13S)-12,13-epoxyoctadeca-9,11-dienoate + H2O. It participates in lipid metabolism; oxylipin biosynthesis. In terms of biological role, cytochrome P450 enzyme involved in the biosynthesis of oxylipin jasmonates, important phytohormones acting as growth regulators and signaling molecules for plant defense. Functions as an allene oxide synthase that converts hydroperoxy fatty acids to unstable allene epoxides. Catalyzes the dehydration of 13-HPOTE ((13S)-hydroperoxy-(9Z,11E,15Z)-octadecatrienoate), as well as 13-HPODE ((13S)-hydroperoxy-(9Z,11E)-octadecadienoate). This Linum usitatissimum (Flax) protein is Allene oxide synthase, chloroplastic (CYP74A).